The following is a 279-amino-acid chain: Energy-coupling factor transporter ATP-binding protein EcfA1 (279 aa).

Residues 5–240 (ITVNNLFFKY…GNRLISLGLD (236 aa)) form the ABC transporter domain. 40–47 (GHNGSGKS) contacts ATP.

It belongs to the ABC transporter superfamily. Energy-coupling factor EcfA family. As to quaternary structure, forms a stable energy-coupling factor (ECF) transporter complex composed of 2 membrane-embedded substrate-binding proteins (S component), 2 ATP-binding proteins (A component) and 2 transmembrane proteins (T component).

It is found in the cell membrane. Its function is as follows. ATP-binding (A) component of a common energy-coupling factor (ECF) ABC-transporter complex. Unlike classic ABC transporters this ECF transporter provides the energy necessary to transport a number of different substrates. This is Energy-coupling factor transporter ATP-binding protein EcfA1 from Streptococcus agalactiae serotype Ia (strain ATCC 27591 / A909 / CDC SS700).